We begin with the raw amino-acid sequence, 409 residues long: Probable sodium/metabolite cotransporter BASS6, chloroplastic (409 aa).

A chloroplast-targeting transit peptide spans 1 to 49 (MSVITTPIETLHLKSTLRLLPRAVYRSQRIQVFPPNIFSNTSLSSPLRI). 9 consecutive transmembrane segments (helical) span residues 100–120 (ILPH…PSFT), 121–141 (WFTS…VGIN), 170–190 (VLGF…TPIG), 191–211 (AGIM…ATFL), 221–241 (IVMT…LSLL), 253–273 (GMIS…LLLN), 285–305 (PFLP…PLAL), 316–336 (ATIL…GYFL), and 381–401 (IPPA…VLIW).

The protein belongs to the bile acid:sodium symporter (BASS) (TC 2.A.28) family.

It is found in the membrane. The protein resides in the plastid. Its subcellular location is the chloroplast envelope. Its function is as follows. May function as sodium-coupled metabolite transporter across the chloroplast envelope. The sequence is that of Probable sodium/metabolite cotransporter BASS6, chloroplastic (BASS6) from Arabidopsis thaliana (Mouse-ear cress).